The following is a 180-amino-acid chain: Inner membrane-spanning protein YciB (180 aa).

Helical transmembrane passes span 4–24 (LLSE…GGGI), 25–45 (QHAT…CYVI), 49–69 (VSKL…ITLI), 76–96 (IKIK…MSGI), 118–138 (ITLS…NEVV), and 150–170 (FKVF…LPLL).

Belongs to the YciB family.

It localises to the cell inner membrane. Its function is as follows. Plays a role in cell envelope biogenesis, maintenance of cell envelope integrity and membrane homeostasis. In Rickettsia africae (strain ESF-5), this protein is Inner membrane-spanning protein YciB.